Reading from the N-terminus, the 2883-residue chain is Bifunctional DNA-directed RNA polymerase subunit beta-beta' (2883 aa).

Residues 1 to 1377 form a DNA-directed RNA polymerase subunit beta region; it reads MPTTLKSGNR…DVTVYGETEE (1377 aa). The interval 1382–2883 is DNA-directed RNA polymerase subunit beta'; sequence PMPIKEDDRP…IRIKEKTEGA (1502 aa). Residues C1447, C1449, C1462, and C1465 each contribute to the Zn(2+) site. Positions 1846, 1848, and 1850 each coordinate Mg(2+). Zn(2+) is bound by residues C2176, C2250, C2257, and C2260.

It in the N-terminal section; belongs to the RNA polymerase beta chain family. The protein in the C-terminal section; belongs to the RNA polymerase beta' chain family. The RNAP catalytic core consists of 2 alpha, 1 beta/beta' and 1 omega subunit. When a sigma factor is associated with the core the holoenzyme is formed, which can initiate transcription. Mg(2+) serves as cofactor. The cofactor is Zn(2+).

It catalyses the reaction RNA(n) + a ribonucleoside 5'-triphosphate = RNA(n+1) + diphosphate. Functionally, DNA-dependent RNA polymerase catalyzes the transcription of DNA into RNA using the four ribonucleoside triphosphates as substrates. The sequence is that of Bifunctional DNA-directed RNA polymerase subunit beta-beta' (rpoBC) from Wolinella succinogenes (strain ATCC 29543 / DSM 1740 / CCUG 13145 / JCM 31913 / LMG 7466 / NCTC 11488 / FDC 602W) (Vibrio succinogenes).